Reading from the N-terminus, the 164-residue chain is DNA-directed RNA polymerase 19 kDa subunit (164 aa).

Over residues 1–35 (MADTDDIIDYESDDLTEYEDDEEEEEDGESLETSD) the composition is skewed to acidic residues. Residues 1–39 (MADTDDIIDYESDDLTEYEDDEEEEEDGESLETSDIDPK) are disordered.

Belongs to the poxviridae DNA-directed RNA polymerase 19 kDa subunit family. As to quaternary structure, the DNA-dependent RNA polymerase used for intermediate and late genes expression consists of eight subunits Rpo30/OPG66, Rpo7/OPG90, Rpo22/OPG103, Rpo147/OPG105, Rpo18/OPG119, Rpo19/OPG131, Rpo132/OPG151 and Rpo35/OPG156. The same holoenzyme, with the addition of the transcription-specificity factor OPG109, is used for early gene expression.

The protein localises to the virion. The enzyme catalyses RNA(n) + a ribonucleoside 5'-triphosphate = RNA(n+1) + diphosphate. Part of the DNA-dependent RNA polymerase which catalyzes the transcription of viral DNA into RNA using the four ribonucleoside triphosphates as substrates. Responsible for the transcription of early, intermediate and late genes. DNA-dependent RNA polymerase associates with the early transcription factor (ETF), itself composed of OPG118 and OPG133, thereby allowing the early genes transcription. Late transcription, and probably also intermediate transcription, require newly synthesized RNA polymerase. This Homo sapiens (Human) protein is DNA-directed RNA polymerase 19 kDa subunit (OPG131).